Reading from the N-terminus, the 269-residue chain is 2-dehydro-3-deoxyphosphooctonate aldolase (269 aa).

Belongs to the KdsA family.

It is found in the cytoplasm. The catalysed reaction is D-arabinose 5-phosphate + phosphoenolpyruvate + H2O = 3-deoxy-alpha-D-manno-2-octulosonate-8-phosphate + phosphate. It functions in the pathway carbohydrate biosynthesis; 3-deoxy-D-manno-octulosonate biosynthesis; 3-deoxy-D-manno-octulosonate from D-ribulose 5-phosphate: step 2/3. The protein operates within bacterial outer membrane biogenesis; lipopolysaccharide biosynthesis. The polypeptide is 2-dehydro-3-deoxyphosphooctonate aldolase (Chlamydia felis (strain Fe/C-56) (Chlamydophila felis)).